A 733-amino-acid chain; its full sequence is Phosphoribosylformylglycinamidine synthase subunit PurL (733 aa).

His-44 is a catalytic residue. Tyr-47 and Lys-86 together coordinate ATP. Residue Glu-88 coordinates Mg(2+). Substrate is bound by residues 89 to 92 (SHNH) and Arg-111. His-90 functions as the Proton acceptor in the catalytic mechanism. A Mg(2+)-binding site is contributed by Asp-112. Residue Gln-233 coordinates substrate. Position 261 (Asp-261) interacts with Mg(2+). A substrate-binding site is contributed by 305 to 307 (ESQ). ATP is bound by residues Asp-492 and Gly-529. Asn-530 contributes to the Mg(2+) binding site. Residue Ser-532 participates in substrate binding.

Belongs to the FGAMS family. Monomer. Part of the FGAM synthase complex composed of 1 PurL, 1 PurQ and 2 PurS subunits.

The protein resides in the cytoplasm. The catalysed reaction is N(2)-formyl-N(1)-(5-phospho-beta-D-ribosyl)glycinamide + L-glutamine + ATP + H2O = 2-formamido-N(1)-(5-O-phospho-beta-D-ribosyl)acetamidine + L-glutamate + ADP + phosphate + H(+). It functions in the pathway purine metabolism; IMP biosynthesis via de novo pathway; 5-amino-1-(5-phospho-D-ribosyl)imidazole from N(2)-formyl-N(1)-(5-phospho-D-ribosyl)glycinamide: step 1/2. Its function is as follows. Part of the phosphoribosylformylglycinamidine synthase complex involved in the purines biosynthetic pathway. Catalyzes the ATP-dependent conversion of formylglycinamide ribonucleotide (FGAR) and glutamine to yield formylglycinamidine ribonucleotide (FGAM) and glutamate. The FGAM synthase complex is composed of three subunits. PurQ produces an ammonia molecule by converting glutamine to glutamate. PurL transfers the ammonia molecule to FGAR to form FGAM in an ATP-dependent manner. PurS interacts with PurQ and PurL and is thought to assist in the transfer of the ammonia molecule from PurQ to PurL. The chain is Phosphoribosylformylglycinamidine synthase subunit PurL from Thermomicrobium roseum (strain ATCC 27502 / DSM 5159 / P-2).